The sequence spans 552 residues: Cation transporter HKT1;1 (552 aa).

Over 1–70 (MHPPSLVLDT…QSYSFLVCKS (70 aa)) the chain is Cytoplasmic. 2 consecutive transmembrane segments (helical) span residues 71-91 (NPLV…FLAL) and 133-153 (LWVL…MLGL). Topologically, residues 154-221 (YFNNANANRN…TYNPCAVLVR (68 aa)) are cytoplasmic. 2 helical membrane-spanning segments follow: residues 222 to 242 (IVTG…IIYF) and 291 to 311 (VLLL…SPLL). The Cytoplasmic segment spans residues 312 to 348 (RLCVWVLGKVSGKAEYAYILQHPGETGYKHLHVRRNS). 2 consecutive transmembrane segments (helical) span residues 349 to 369 (VYIV…ICSF) and 402 to 422 (ILDI…VMYL). Residues 423 to 448 (PSDASFLTANADNQPLTDKKTNSISR) lie on the Cytoplasmic side of the membrane. The next 2 helical transmembrane spans lie at 449-471 (ALWR…LACI) and 524-544 (GFVG…MFLG). Topologically, residues 545-552 (RLKEFILK) are cytoplasmic.

It belongs to the TrkH potassium transport family. HKT (TC 2.A.38.3) subfamily. In terms of tissue distribution, expressed in shoots. In roots, expressed in epidermis, exodermis, cortex, and sieve elements and companion cells of phloem. In mature leaves, expressed in large highly vacuolated cells of the adaxial epidermis, phloem and xylem.

It is found in the membrane. It carries out the reaction Na(+)(in) = Na(+)(out). In terms of biological role, functions as a low-affinity sodium transporter. The polypeptide is Cation transporter HKT1;1 (Oryza sativa subsp. japonica (Rice)).